A 460-amino-acid chain; its full sequence is Bifunctional protein GlmU (460 aa).

The tract at residues 1–237 (MSSNQYTAGA…DPDLLGVNTP (237 aa)) is pyrophosphorylase. UDP-N-acetyl-alpha-D-glucosamine contacts are provided by residues 13 to 16 (LAAG), Lys27, Gln78, and 83 to 84 (GT). Position 109 (Asp109) interacts with Mg(2+). 4 residues coordinate UDP-N-acetyl-alpha-D-glucosamine: Gly146, Glu160, Asn177, and Asn235. Asn235 contributes to the Mg(2+) binding site. Residues 238–258 (AELMRSEELLRENIVTRHLHN) form a linker region. Positions 259–460 (GVHVHAAGSV…QKNLRKTRHS (202 aa)) are N-acetyltransferase. UDP-N-acetyl-alpha-D-glucosamine-binding residues include Arg341 and Lys359. His371 functions as the Proton acceptor in the catalytic mechanism. UDP-N-acetyl-alpha-D-glucosamine-binding residues include Tyr374 and Asn385. Acetyl-CoA-binding positions include Ala388, 394-395 (NY), Ser413, Ala431, and Arg448.

In the N-terminal section; belongs to the N-acetylglucosamine-1-phosphate uridyltransferase family. The protein in the C-terminal section; belongs to the transferase hexapeptide repeat family. In terms of assembly, homotrimer. It depends on Mg(2+) as a cofactor.

It localises to the cytoplasm. The enzyme catalyses alpha-D-glucosamine 1-phosphate + acetyl-CoA = N-acetyl-alpha-D-glucosamine 1-phosphate + CoA + H(+). It carries out the reaction N-acetyl-alpha-D-glucosamine 1-phosphate + UTP + H(+) = UDP-N-acetyl-alpha-D-glucosamine + diphosphate. The protein operates within nucleotide-sugar biosynthesis; UDP-N-acetyl-alpha-D-glucosamine biosynthesis; N-acetyl-alpha-D-glucosamine 1-phosphate from alpha-D-glucosamine 6-phosphate (route II): step 2/2. Its pathway is nucleotide-sugar biosynthesis; UDP-N-acetyl-alpha-D-glucosamine biosynthesis; UDP-N-acetyl-alpha-D-glucosamine from N-acetyl-alpha-D-glucosamine 1-phosphate: step 1/1. It participates in bacterial outer membrane biogenesis; LPS lipid A biosynthesis. In terms of biological role, catalyzes the last two sequential reactions in the de novo biosynthetic pathway for UDP-N-acetylglucosamine (UDP-GlcNAc). The C-terminal domain catalyzes the transfer of acetyl group from acetyl coenzyme A to glucosamine-1-phosphate (GlcN-1-P) to produce N-acetylglucosamine-1-phosphate (GlcNAc-1-P), which is converted into UDP-GlcNAc by the transfer of uridine 5-monophosphate (from uridine 5-triphosphate), a reaction catalyzed by the N-terminal domain. The protein is Bifunctional protein GlmU of Oleidesulfovibrio alaskensis (strain ATCC BAA-1058 / DSM 17464 / G20) (Desulfovibrio alaskensis).